The primary structure comprises 766 residues: MTSASAPPDLKAHGLSPEEYRQIQQQLGRDPNPTELAMFGVMWSEHCCYKNSRPLLKHFPTTGERVVVGPGENAGVVDLGDGDWLAFKIESHNHPSAVEPFQGAATGVGGILRDIFTLGARPIALLNSLRFGPLTDPRNRRLMARVVEGIAHYGNCVGVPTVGGEVAVDPCYSGNPLVNVMALGLLETPAVVKSAARGVGNPILYVGATTGRDGIRGASFASAELKEDAQQDRPAVQVGDPFLGKCLIEACLEAFATVAVVAAQDMGAAGITCSTAEMAAKGGVGIRFDLDRVPARESGMAAWEYLLSESQERMLLVVQKGREAEVMEIFHRWGLQASVAGEVIAEPLVEIWHQGSCVVRVPARALAEDTPVYVRPLLPEPPEYVQAAWQWDPSTLPPCDRQGIHLPQKTLAWEQVLLQLLASPTLASKAWIYRQYDHQVQNNTVLWPGQGDAAVIRIRSQKFGVGEVPPLQAARKAIAATLDGNGRWVYLDPYEGAKAAVAEAARNLSCVGADPLAITDNLNFGSPENPVVYWQLALACRGIAEACRALGTPVTGGNVSLYNEKGSQAIYPTPVIGMVGLIPDLKFICGQGWQQEGDLVYLLGSQAVTSLGGSEYLAAIYNKVTGRPAPVDLELEKRVQGACRHGIRQGWVRSAHDCSEGGLAVALAEACLSGGRGASVSLAPGSLPWDQALFGEGSSRILVSVDPAQRSPWEAYLESQLPGQWQLLGQVGGPADPLVLTTAEGDPLLSVSLAALQGAYYSAFAD.

His46 is an active-site residue. Tyr49 and Lys88 together coordinate ATP. A Mg(2+)-binding site is contributed by Glu90. Substrate-binding positions include 91 to 94 (SHNH) and Arg113. The active-site Proton acceptor is the His92. Asp114 serves as a coordination point for Mg(2+). Gln237 lines the substrate pocket. Asp265 contacts Mg(2+). 309–311 (ESQ) is a binding site for substrate. ATP contacts are provided by Asp520 and Gly557. Residue Asn558 participates in Mg(2+) binding. Ser560 provides a ligand contact to substrate.

Belongs to the FGAMS family. In terms of assembly, monomer. Part of the FGAM synthase complex composed of 1 PurL, 1 PurQ and 2 PurS subunits.

The protein resides in the cytoplasm. The catalysed reaction is N(2)-formyl-N(1)-(5-phospho-beta-D-ribosyl)glycinamide + L-glutamine + ATP + H2O = 2-formamido-N(1)-(5-O-phospho-beta-D-ribosyl)acetamidine + L-glutamate + ADP + phosphate + H(+). The protein operates within purine metabolism; IMP biosynthesis via de novo pathway; 5-amino-1-(5-phospho-D-ribosyl)imidazole from N(2)-formyl-N(1)-(5-phospho-D-ribosyl)glycinamide: step 1/2. Functionally, part of the phosphoribosylformylglycinamidine synthase complex involved in the purines biosynthetic pathway. Catalyzes the ATP-dependent conversion of formylglycinamide ribonucleotide (FGAR) and glutamine to yield formylglycinamidine ribonucleotide (FGAM) and glutamate. The FGAM synthase complex is composed of three subunits. PurQ produces an ammonia molecule by converting glutamine to glutamate. PurL transfers the ammonia molecule to FGAR to form FGAM in an ATP-dependent manner. PurS interacts with PurQ and PurL and is thought to assist in the transfer of the ammonia molecule from PurQ to PurL. This Synechococcus sp. (strain JA-3-3Ab) (Cyanobacteria bacterium Yellowstone A-Prime) protein is Phosphoribosylformylglycinamidine synthase subunit PurL.